The chain runs to 198 residues: Iron-sulfur flavoprotein MJ0731 (198 aa).

Residues cysteine 46, cysteine 49, cysteine 52, and cysteine 59 each coordinate [4Fe-4S] cluster.

Belongs to the SsuE family. Isf subfamily. As to quaternary structure, homodimer. The cofactor is FMN. It depends on [4Fe-4S] cluster as a cofactor.

In terms of biological role, redox-active protein probably involved in electron transport. This chain is Iron-sulfur flavoprotein MJ0731, found in Methanocaldococcus jannaschii (strain ATCC 43067 / DSM 2661 / JAL-1 / JCM 10045 / NBRC 100440) (Methanococcus jannaschii).